Here is a 773-residue protein sequence, read N- to C-terminus: Angiomotin-like protein 2 (773 aa).

Disordered stretches follow at residues 41-157 (GGAG…HVRS), 169-238 (RNGA…SPHF), and 259-309 (QYQY…LAQM). Composition is skewed to basic and acidic residues over residues 80 to 91 (QGGETHLAENRL), 100 to 112 (KGEE…EAKA), and 141 to 152 (RRQDEALRELRH). A required for interaction with CDH5 region spans residues 101 to 302 (GEELPTYEEA…GPPGAQATSG (202 aa)). At tyrosine 107 the chain carries Phosphotyrosine; by FGFR1. The segment covering 177–190 (HMSSSHSFPQLARS) has biased composition (polar residues). The span at 196–213 (PRGPPAEGPEPRGPPPQY) shows a compositional bias: pro residues. A required for interaction with CDH1 region spans residues 220 to 302 (QETAAVNDPR…GPPGAQATSG (83 aa)). Residues 304–577 (AHLAQMESVL…KYLEERAMRQ (274 aa)) are a coiled coil. Residues lysine 342 and lysine 403 each participate in a glycyl lysine isopeptide (Lys-Gly) (interchain with G-Cter in ubiquitin) cross-link. Disordered regions lie at residues 589-611 (QRDT…NEGL) and 677-754 (WQGF…TTSL). The span at 701–710 (EEPPATPPLP) shows a compositional bias: pro residues. The span at 719 to 734 (DGSTQTDGPADSTSAC) shows a compositional bias: polar residues. A phosphoserine mark is found at serine 753 and serine 756. Positions 770 to 773 (EILI) match the PDZ-binding motif.

Belongs to the angiomotin family. Part of a complex composed of AMOTL2, MAGI1 and CDH5, within the complex AMOTL2 acts as a scaffold protein for the interaction of MAGI1 with CDH5. The complex is required for coupling actin fibers to cell junctions in endothelial cells. Within the complex AMOTL2 (via its N-terminus) interacts with CDH5. Interacts (via N-terminus) with MAGI1. Interacts (via N-terminus) with ACTB; the interaction facilitates binding of cell junction complexes to actin fibers in endothelial cells. Interacts with CDH1; the interaction may facilitate binding of radial actin fibers to cell junction complexes. Interacts with SRC. Interacts with YAP1; the interaction is required for ubiquitination of AMOTL2 and localization of YAP1 to tight junctions. Interacts with WWP1; the interaction facilitates WWP1 interaction with the Crumbs complex and subsequent WWP1 translocation to the plasma membrane. WWP1 interaction with the Crumbs complex promotes WWP1 monoubiquitination of AMOTL2 which subsequently activates the Hippo signaling pathway. When ubiquitinated interacts with LATS2 (via UBA domain); the interaction promotes LATS2 phosphorylation of YAP1. Interacts (via PPXY motif) with WWTR1/TAZ (via WW domain); the interaction promotes WWTR1/TAZ localization to the cytoplasm and thereby inhibition of its transcriptional properties. Interacts with PHLDB2; interaction may facilitate PHLDB2 localization to the myotube podosome cortex that surrounds the core. Post-translationally, monoubiquitinated at Lys-342 and Lys-403 by Crumbs complex-bound WWP1. De-ubiquitinated at Lys-342 and Lys-403 by USP9X; the interaction may be promoted by cell contact inhibition. Deubiquitination of AMOTL2 negatively regulates Hippo signaling activation. Phosphorylation at Tyr-107 is necessary for efficient binding to SRC and synergistically functioning with SRC to activate the downstream MAPK pathway.

The protein localises to the recycling endosome. It localises to the cytoplasm. Its subcellular location is the cell projection. It is found in the podosome. The protein resides in the cell junction. Regulates the translocation of phosphorylated SRC to peripheral cell-matrix adhesion sites. Required for proper architecture of actin filaments. Plays a role in coupling actin fibers to cell junctions in endothelial cells and is therefore required for correct endothelial cell morphology via facilitating transcellular transmission of mechanical force resulting in endothelial cell elongation. Required for the anchoring of radial actin fibers to CDH1 junction complexes at the cell membrane which facilitates organization of radial actin fiber structure and cellular response to contractile forces. This contributes to maintenance of cell area, size, shape, epithelial sheet organization and trophectoderm cell properties that facilitate blastocyst zona hatching. Inhibits the Wnt/beta-catenin signaling pathway, probably by recruiting CTNNB1 to recycling endosomes and hence preventing its translocation to the nucleus. Participates in angiogenesis. Activates the Hippo signaling pathway in response to cell contact inhibition via interaction with and ubiquitination by Crumbs complex-bound WWP1. Ubiquitinated AMOTL2 then interacts with LATS2 which in turn phosphorylates YAP1, excluding it from the nucleus and localizing it to the cytoplasm and tight junctions, therefore ultimately repressing YAP1-driven transcription of target genes. Acts to inhibit WWTR1/TAZ transcriptional coactivator activity via sequestering WWTR1/TAZ in the cytoplasm and at tight junctions. Regulates the size and protein composition of the podosome cortex and core at myofibril neuromuscular junctions. Selectively promotes FGF-induced MAPK activation through SRC. May play a role in the polarity, proliferation and migration of endothelial cells. This Rattus norvegicus (Rat) protein is Angiomotin-like protein 2.